The primary structure comprises 379 residues: Alcohol dehydrogenase 2 (379 aa).

Cys-48 serves as a coordination point for Zn(2+). Position 49 to 53 (His-49 to Leu-53) interacts with NAD(+). Residues His-69, Cys-100, Cys-103, Cys-106, Cys-114, and Cys-178 each coordinate Zn(2+). NAD(+) contacts are provided by residues Gly-203–Gly-208, Asp-227, Lys-232, Thr-275–Ile-277, Ile-298–Ala-300, and Thr-321–Phe-323.

Belongs to the zinc-containing alcohol dehydrogenase family. Class-IV subfamily. Homodimer. Requires Zn(2+) as cofactor. In terms of tissue distribution, expressed in flowers and disk florets.

The catalysed reaction is (R,R)-chrysanthemol + NAD(+) = (1R,3R)-chrysanthemal + NADH + H(+). It catalyses the reaction nerol + NAD(+) = neral + NADH + H(+). It carries out the reaction (S)-(-)-citronellol + NAD(+) = (S)-(-)-citronellal + NADH + H(+). The enzyme catalyses perillyl alcohol + NAD(+) = perillyl aldehyde + NADH + H(+). The catalysed reaction is (6E)-8-hydroxygeraniol + NAD(+) = (6E)-8-hydroxygeranial + NADH + H(+). It catalyses the reaction (2E)-geraniol + NAD(+) = (2E)-geranial + NADH + H(+). Its pathway is isoprenoid biosynthesis. In terms of biological role, component of the monoterpenoid pyrethrins biosynthesis; pyrethrins are widely used plant-derived pesticide. Mediates the conversion of trans-chrysanthemol into trans-chrysanthemal. This Tanacetum cinerariifolium (Dalmatian daisy) protein is Alcohol dehydrogenase 2.